Consider the following 77-residue polypeptide: Secapin (77 aa).

An N-terminal signal peptide occupies residues 1–32; that stretch reads MKNYSKNATYLITVLLFSFVAMLLIIPSKCEA. Positions 33–52 are excised as a propeptide; it reads VSNDMQPLEARSADLVPEPR. A disulfide bridge connects residues C61 and C72.

Belongs to the secapin family. As to expression, expressed by the venom gland.

It localises to the secreted. Functionally, nontoxic peptide. The protein is Secapin of Vespa magnifica (Hornet).